A 319-amino-acid chain; its full sequence is MSISSPSAASGHLVSVSAPAKINLHLEVLGLRSDGFHELAMVMQSIELADQLHFRNTADGTISLRCDDSSLSTAGDNLIVQAAHLLRERSGFSELGAAIELQKRIPIGAGLAGGSSDGAATLVGLNGLWNLNFSQGQLEGFAAELGSDMPFCLAGGSQLCFGRGERLESLQAMQASMAVVLVKDPSVSVSTPWAYGRCKELFRSRYLSQESDFEQRRQQLRESSWLNPLRADDPPPLHNDLQAVVAPEVFAVQTTLKLLSDLPGSLAVAMSGSGPSCFALFADVDSAQAALKRQQPAFDAAGLSSWCCAFRSEGIKLEA.

The active site involves lysine 21. Residue 106-116 (PIGAGLAGGSS) coordinates ATP. Residue aspartate 148 is part of the active site.

It belongs to the GHMP kinase family. IspE subfamily.

The enzyme catalyses 4-CDP-2-C-methyl-D-erythritol + ATP = 4-CDP-2-C-methyl-D-erythritol 2-phosphate + ADP + H(+). The protein operates within isoprenoid biosynthesis; isopentenyl diphosphate biosynthesis via DXP pathway; isopentenyl diphosphate from 1-deoxy-D-xylulose 5-phosphate: step 3/6. In terms of biological role, catalyzes the phosphorylation of the position 2 hydroxy group of 4-diphosphocytidyl-2C-methyl-D-erythritol. The sequence is that of 4-diphosphocytidyl-2-C-methyl-D-erythritol kinase from Prochlorococcus marinus (strain MIT 9303).